A 431-amino-acid polypeptide reads, in one-letter code: Probable zinc metalloprotease Lema_P086240 (431 aa).

Asparagine 46 carries an N-linked (GlcNAc...) asparagine glycan. The Zn(2+) site is built by histidine 117, aspartate 137, and glutamate 170. An N-linked (GlcNAc...) asparagine glycan is attached at asparagine 185. A Zn(2+)-binding site is contributed by aspartate 197. Residues asparagine 258, asparagine 310, asparagine 349, asparagine 359, and asparagine 369 are each glycosylated (N-linked (GlcNAc...) asparagine). One can recognise a Fibronectin type-III domain in the interval 344 to 431; the sequence is PGMPRNVTID…KSPAVYPFPG (88 aa).

The protein belongs to the peptidase M28 family. M28B subfamily. Zn(2+) serves as cofactor.

It is found in the secreted. This Leptosphaeria maculans (strain JN3 / isolate v23.1.3 / race Av1-4-5-6-7-8) (Blackleg fungus) protein is Probable zinc metalloprotease Lema_P086240.